The primary structure comprises 232 residues: Ion-translocating oxidoreductase complex subunit E (232 aa).

6 helical membrane passes run 18 to 38, 39 to 59, 69 to 89, 93 to 113, 127 to 147, and 182 to 202; these read GLVQ…LTNA, IGLG…VSLV, IPVF…LINA, GLYL…VIIG, AAFD…LLGA, and NFLL…LIAI.

The protein belongs to the NqrDE/RnfAE family. In terms of assembly, the complex is composed of six subunits: RnfA, RnfB, RnfC, RnfD, RnfE and RnfG.

Its subcellular location is the cell inner membrane. Its function is as follows. Part of a membrane-bound complex that couples electron transfer with translocation of ions across the membrane. This chain is Ion-translocating oxidoreductase complex subunit E, found in Shewanella loihica (strain ATCC BAA-1088 / PV-4).